Consider the following 793-residue polypeptide: MDERTLRTLEFAKIKEMLAERTATSLGREVVESLAPATDFLEVQHRQAETSEARRLYEGGHAIPLGGLHDLRAHVQRAVRGGVLDPGDLLDVADTAASSRRLKRFLEEQEGLPILTALSRMLGTFHHLEAEIRQAVDEHGEVRDDASPALAEIRRSMRILQNRMKERLDAFVRGSAAKYLQDPIVTIREGRFVVPVKIEYRAQVPGIVHDQSASGSTLFIEPMAIVEMNNDLRELALKEHEEVERILARLSSLVAGEADALLDTLQAVAQIDFASAKGKLSLDLDCTEPELVREPILEIHKGRHPLLKGRVVPIDVHIGITFDTLVITGPNTGGKTVALKTMGLFVLMAQAGLHLPAGHGTRVGVFQQVFVDIGDEQSIEQSLSTFSGHMTNIIRILDALEGPALVLLDELGAGTDPTEGAALAMSILEHLHKRGAKTVATTHYSELKTYAYTRSRVENASVEFDVETLRPTFRLLIGVPGSSNAFEISRRLGLSPHIVDRARQFLTQEQERVEDLIQGIHATRAELEKERAEAHRLRAEAQRMREEYERRYGDAQRKAAETVEKARAQAQQILATARREAEAVIAELKQALREQREAERMQAIQSARSRLARARQAVEPTEEEQRARRRGEVPRGLKPGDKVRVVSLDTTGYVLSEPDADGNVLVQAGILKMTVSLTDLERASEEQPAAGAGGPARMRTHGKGLAVSKAREMSPEVDLRGLMVEEALERVDKFLDDAVLAGLPQVRIIHGKGTGALRKAVTEALRHDRRVESYRLGGVGEGGDGVTVAKLRE.

329 to 336 (GPNTGGKT) contributes to the ATP binding site. The segment at 611-639 (LARARQAVEPTEEEQRARRRGEVPRGLKP) is disordered. Positions 623 to 639 (EEQRARRRGEVPRGLKP) are enriched in basic and acidic residues. The region spanning 717–792 (VDLRGLMVEE…GDGVTVAKLR (76 aa)) is the Smr domain.

The protein belongs to the DNA mismatch repair MutS family. MutS2 subfamily. In terms of assembly, homodimer. Binds to stalled ribosomes, contacting rRNA.

Its function is as follows. Endonuclease that is involved in the suppression of homologous recombination and thus may have a key role in the control of bacterial genetic diversity. Functionally, acts as a ribosome collision sensor, splitting the ribosome into its 2 subunits. Detects stalled/collided 70S ribosomes which it binds and splits by an ATP-hydrolysis driven conformational change. Acts upstream of the ribosome quality control system (RQC), a ribosome-associated complex that mediates the extraction of incompletely synthesized nascent chains from stalled ribosomes and their subsequent degradation. Probably generates substrates for RQC. The sequence is that of Endonuclease MutS2 from Symbiobacterium thermophilum (strain DSM 24528 / JCM 14929 / IAM 14863 / T).